Consider the following 753-residue polypeptide: 5-methyltetrahydropteroyltriglutamate--homocysteine methyltransferase (753 aa).

Residues 17 to 20 and Lys-117 each bind 5-methyltetrahydropteroyltri-L-glutamate; that span reads RELK. Residues 431 to 433 and Glu-484 each bind L-homocysteine; that span reads IGS. L-methionine contacts are provided by residues 431-433 and Glu-484; that span reads IGS. 5-methyltetrahydropteroyltri-L-glutamate contacts are provided by residues 515-516 and Trp-561; that span reads RC. Asp-599 is an L-homocysteine binding site. Position 599 (Asp-599) interacts with L-methionine. 5-methyltetrahydropteroyltri-L-glutamate is bound at residue Glu-605. Residues His-641, Cys-643, and Glu-665 each coordinate Zn(2+). His-694 functions as the Proton donor in the catalytic mechanism. Residue Cys-726 participates in Zn(2+) binding.

It belongs to the vitamin-B12 independent methionine synthase family. Zn(2+) is required as a cofactor.

The enzyme catalyses 5-methyltetrahydropteroyltri-L-glutamate + L-homocysteine = tetrahydropteroyltri-L-glutamate + L-methionine. The protein operates within amino-acid biosynthesis; L-methionine biosynthesis via de novo pathway; L-methionine from L-homocysteine (MetE route): step 1/1. In terms of biological role, catalyzes the transfer of a methyl group from 5-methyltetrahydrofolate to homocysteine resulting in methionine formation. The protein is 5-methyltetrahydropteroyltriglutamate--homocysteine methyltransferase of Enterobacter sp. (strain 638).